Here is a 301-residue protein sequence, read N- to C-terminus: ATP synthase gamma chain (301 aa).

Belongs to the ATPase gamma chain family. F-type ATPases have 2 components, CF(1) - the catalytic core - and CF(0) - the membrane proton channel. CF(1) has five subunits: alpha(3), beta(3), gamma(1), delta(1), epsilon(1). CF(0) has three main subunits: a, b and c.

It localises to the cell inner membrane. In terms of biological role, produces ATP from ADP in the presence of a proton gradient across the membrane. The gamma chain is believed to be important in regulating ATPase activity and the flow of protons through the CF(0) complex. This Bordetella parapertussis (strain 12822 / ATCC BAA-587 / NCTC 13253) protein is ATP synthase gamma chain.